The primary structure comprises 483 residues: Malonate-semialdehyde dehydrogenase 2 (483 aa).

NAD(+) contacts are provided by phenylalanine 152, lysine 176, glutamate 179, arginine 180, and serine 229. Cysteine 284 serves as the catalytic Nucleophile. Glutamate 384 is a binding site for NAD(+).

This sequence belongs to the aldehyde dehydrogenase family. IolA subfamily. In terms of assembly, homotetramer.

It catalyses the reaction 3-oxopropanoate + NAD(+) + CoA + H2O = hydrogencarbonate + acetyl-CoA + NADH + H(+). The enzyme catalyses 2-methyl-3-oxopropanoate + NAD(+) + CoA + H2O = propanoyl-CoA + hydrogencarbonate + NADH + H(+). Its pathway is polyol metabolism; myo-inositol degradation into acetyl-CoA; acetyl-CoA from myo-inositol: step 7/7. Functionally, catalyzes the oxidation of malonate semialdehyde (MSA) and methylmalonate semialdehyde (MMSA) into acetyl-CoA and propanoyl-CoA, respectively. Is involved in a myo-inositol catabolic pathway. Bicarbonate, and not CO2, is the end-product of the enzymatic reaction. In Geobacillus thermodenitrificans (strain NG80-2), this protein is Malonate-semialdehyde dehydrogenase 2.